Consider the following 321-residue polypeptide: Manganese-dependent ADP-ribose/CDP-alcohol diphosphatase (321 aa).

Zn(2+)-binding residues include D25, Q27, D72, N107, H226, H263, and H265.

The protein belongs to the ADPRibase-Mn family. As to quaternary structure, monomer. It depends on Mg(2+) as a cofactor.

The catalysed reaction is CDP-choline + H2O = phosphocholine + CMP + 2 H(+). It catalyses the reaction ADP-D-ribose + H2O = D-ribose 5-phosphate + AMP + 2 H(+). It carries out the reaction CDP-glycerol + H2O = sn-glycerol 3-phosphate + CMP + 2 H(+). In terms of biological role, hydrolyzes ADP-ribose, IDP-ribose, CDP-glycerol, CDP-choline and CDP-ethanolamine, but not other non-reducing ADP-sugars or CDP-glucose. The sequence is that of Manganese-dependent ADP-ribose/CDP-alcohol diphosphatase from Oryza sativa subsp. japonica (Rice).